Consider the following 116-residue polypeptide: Integration host factor subunit alpha (116 aa).

Disordered stretches follow at residues 58–80 (FGNFQVRDKPPRPGRNPKTGETI) and 94–116 (QKLKSTVEQSGNPAEVSDDEAAE). Polar residues predominate over residues 94–105 (QKLKSTVEQSGN).

The protein belongs to the bacterial histone-like protein family. As to quaternary structure, heterodimer of an alpha and a beta chain.

This protein is one of the two subunits of integration host factor, a specific DNA-binding protein that functions in genetic recombination as well as in transcriptional and translational control. This is Integration host factor subunit alpha from Bordetella avium (strain 197N).